The sequence spans 246 residues: Adenosylcobinamide-GDP ribazoletransferase (246 aa).

Helical transmembrane passes span 34–54 (IVTFPLVGLLLGAIAGAVALL), 59–79 (CGVPLAALFGVLALALLTGGF), 113–133 (GGLALIFVLVAKVLVVGELLL), 136–156 (IHPIAALAAACAVGRGMAALL), 181–201 (TLVTMAMAIALATALLGLQGL), and 203–223 (AALITLVLIWGLGWALKRTLG).

It belongs to the CobS family. It depends on Mg(2+) as a cofactor.

Its subcellular location is the cell inner membrane. The enzyme catalyses alpha-ribazole + adenosylcob(III)inamide-GDP = adenosylcob(III)alamin + GMP + H(+). It carries out the reaction alpha-ribazole 5'-phosphate + adenosylcob(III)inamide-GDP = adenosylcob(III)alamin 5'-phosphate + GMP + H(+). It participates in cofactor biosynthesis; adenosylcobalamin biosynthesis; adenosylcobalamin from cob(II)yrinate a,c-diamide: step 7/7. Its function is as follows. Joins adenosylcobinamide-GDP and alpha-ribazole to generate adenosylcobalamin (Ado-cobalamin). Also synthesizes adenosylcobalamin 5'-phosphate from adenosylcobinamide-GDP and alpha-ribazole 5'-phosphate. The protein is Adenosylcobinamide-GDP ribazoletransferase of Klebsiella pneumoniae subsp. pneumoniae (strain ATCC 700721 / MGH 78578).